Here is a 1238-residue protein sequence, read N- to C-terminus: ATP-dependent helicase/nuclease subunit A (1238 aa).

Residues 6–474 enclose the UvrD-like helicase ATP-binding domain; it reads TKWTETQKSA…IKLSENFRSR (469 aa). 27–34 lines the ATP pocket; it reads AGAGTGKT. Residues 512 to 811 form the UvrD-like helicase C-terminal domain; that stretch reads PFEGNCGGDV…RIMSIHKSKG (300 aa).

Belongs to the helicase family. AddA subfamily. As to quaternary structure, heterodimer of AddA and AddB/RexB. Mg(2+) is required as a cofactor.

The enzyme catalyses Couples ATP hydrolysis with the unwinding of duplex DNA by translocating in the 3'-5' direction.. The catalysed reaction is ATP + H2O = ADP + phosphate + H(+). Functionally, the heterodimer acts as both an ATP-dependent DNA helicase and an ATP-dependent, dual-direction single-stranded exonuclease. Recognizes the chi site generating a DNA molecule suitable for the initiation of homologous recombination. The AddA nuclease domain is required for chi fragment generation; this subunit has the helicase and 3' -&gt; 5' nuclease activities. The polypeptide is ATP-dependent helicase/nuclease subunit A (Clostridium kluyveri (strain NBRC 12016)).